A 164-amino-acid chain; its full sequence is 3-isopropylmalate dehydratase small subunit (164 aa).

Belongs to the LeuD family. LeuD type 2 subfamily. As to quaternary structure, heterodimer of LeuC and LeuD.

The catalysed reaction is (2R,3S)-3-isopropylmalate = (2S)-2-isopropylmalate. It participates in amino-acid biosynthesis; L-leucine biosynthesis; L-leucine from 3-methyl-2-oxobutanoate: step 2/4. Its function is as follows. Catalyzes the isomerization between 2-isopropylmalate and 3-isopropylmalate, via the formation of 2-isopropylmaleate. The polypeptide is 3-isopropylmalate dehydratase small subunit (Syntrophus aciditrophicus (strain SB)).